A 689-amino-acid chain; its full sequence is Solute carrier family 22 member 23 (689 aa).

Disordered stretches follow at residues 1–55 (MAID…PLPA) and 162–188 (TASWGTTSNRSNSSDTPPLPSPPGKGN). Asparagine 24 is a glycosylation site (N-linked (GlcNAc...) asparagine). Over residues 165-177 (WGTTSNRSNSSDT) the composition is skewed to polar residues. A run of 2 helical transmembrane segments spans residues 229 to 249 (FSLLVGLIFGYLITGCIADWV) and 253 to 273 (PVLLFSVIFILIFGLTVALSV). Asparagine 274 is a glycosylation site (N-linked (GlcNAc...) asparagine). A run of 8 helical transmembrane segments spans residues 283–303 (FFEGFCLAGIILTLYALRIEL), 310–330 (FIITMVASFVAMAGQFLMPGL), 339–359 (VLQALIICPFLLMLLYWSIFP), 462–482 (ADYYTMASIALASCLAMCLVV), 489–509 (GGLLLFMILTALASLLQLGLL), 541–561 (IAFSIVGMFASHAVGSLSVFF), 572–592 (CGGLGLVLASAGFGMLTAPII), and 601–621 (FLHHIIFACCTLICIICILLL).

Belongs to the major facilitator (TC 2.A.1) superfamily. Organic cation transporter (TC 2.A.1.19) family. In terms of tissue distribution, expressed in many tissues, including brain, spinal cord, kidney, liver, eye, adipose tissue, lung, epididymis, adrenal gland, pineal gland, skeletal muscle, heart, spleen, thymus, ovary, uterus, testis and epididymis.

It localises to the membrane. The sequence is that of Solute carrier family 22 member 23 (Slc22a23) from Rattus norvegicus (Rat).